Reading from the N-terminus, the 577-residue chain is MNIQALINDKVSQALEAAGAPAGSPAAVRQSAKPQFGDYQANGVMGVAKQLGTNPREFAQKVLDVLDLDGIASKTEIAGPGFINIFLSEEFLAKQAEAALADPRLGVASEEAQTIVADYSAPNVAKEMHVGHLRSTIIGDAVVRTLEFLGHKVIRANHIGDWGTQFGMLIANLERVQQESGEVSMELADLEGFYRESKKLYDEDEEFAVKARGYVVKLQSGDEFCAEMWKKLVDVTMIQNQRNYDRLNVSLSRDDVMGESMYNDMLPKIVADLKAQGLAVEDDGAQVVFLEEFKNKDGEPMGVIVQKRDGGFLYTTTDIACAKYRYEELGADRVLYFIDSRQHQHLMQAWTIVRKAGYVPESVSLEHHAFGMMLGKDGKPFKTRAGGTVRLADLLDEAEVRAAQLIESKNPELAEDEKKAIANTVAMAAVKYADLSKHRTTDYVFDWDNMLAFEGNTAPYMQYAYTRVASVFAKAGVSMDDLQGEIKITDEKEKALIAKLMQFEEAVQSVAREGQPHIMCSYLFELAGQFSSFYEACPILVAEDEAVKQSRLKLAALTAKTIKQGLSLLGIDTLERM.

A 'HIGH' region motif is present at residues 122–132 (PNVAKEMHVGH).

It belongs to the class-I aminoacyl-tRNA synthetase family. Monomer.

The protein localises to the cytoplasm. The enzyme catalyses tRNA(Arg) + L-arginine + ATP = L-arginyl-tRNA(Arg) + AMP + diphosphate. The chain is Arginine--tRNA ligase from Vibrio vulnificus (strain CMCP6).